The primary structure comprises 213 residues: MLKNIFYIIMGPPGSGKGTQSQCLAEKLGLPHISSGNLLRSAIKASTPLGIKASEYIDEGQLVPNGLVWEIVQETLNKSECLSGCIIDGFPRTLDQAVLLHDFLVKANADYRVIQLDVADEEIIRRIYSRFICPSCNFVYNQSQGFRECPTCHSELVRRSDDTLEVIQKRLESYKNTTASVIDYYADLGKLTCVPAEKSPDEVFQSILACIED.

14-19 is a binding site for ATP; the sequence is GSGKGT. Residues 34–63 form an NMP region; it reads SSGNLLRSAIKASTPLGIKASEYIDEGQLV. Residues serine 35, arginine 40, 61–63, 89–92, and glutamine 96 contribute to the AMP site; these read QLV and GFPR. Residues 129–162 are LID; that stretch reads SRFICPSCNFVYNQSQGFRECPTCHSELVRRSDD. Residue arginine 130 participates in ATP binding. 2 residues coordinate Zn(2+): cysteine 133 and cysteine 136. Position 139 to 140 (139 to 140) interacts with ATP; the sequence is VY. Residues cysteine 149 and cysteine 152 each contribute to the Zn(2+) site. Positions 159 and 170 each coordinate AMP. Lysine 198 serves as a coordination point for ATP.

The protein belongs to the adenylate kinase family. As to quaternary structure, monomer.

Its subcellular location is the cytoplasm. The catalysed reaction is AMP + ATP = 2 ADP. The protein operates within purine metabolism; AMP biosynthesis via salvage pathway; AMP from ADP: step 1/1. Catalyzes the reversible transfer of the terminal phosphate group between ATP and AMP. Plays an important role in cellular energy homeostasis and in adenine nucleotide metabolism. This Chlamydia felis (strain Fe/C-56) (Chlamydophila felis) protein is Adenylate kinase.